The primary structure comprises 301 residues: tRNA-cytidine(32) 2-sulfurtransferase (301 aa).

The short motif at 55–60 is the PP-loop motif element; the sequence is SGGKDS. [4Fe-4S] cluster is bound by residues cysteine 130, cysteine 133, and cysteine 221.

It belongs to the TtcA family. Homodimer. It depends on Mg(2+) as a cofactor. Requires [4Fe-4S] cluster as cofactor.

It is found in the cytoplasm. It carries out the reaction cytidine(32) in tRNA + S-sulfanyl-L-cysteinyl-[cysteine desulfurase] + AH2 + ATP = 2-thiocytidine(32) in tRNA + L-cysteinyl-[cysteine desulfurase] + A + AMP + diphosphate + H(+). Its pathway is tRNA modification. In terms of biological role, catalyzes the ATP-dependent 2-thiolation of cytidine in position 32 of tRNA, to form 2-thiocytidine (s(2)C32). The sulfur atoms are provided by the cysteine/cysteine desulfurase (IscS) system. This is tRNA-cytidine(32) 2-sulfurtransferase from Acinetobacter baylyi (strain ATCC 33305 / BD413 / ADP1).